A 470-amino-acid chain; its full sequence is Neuraminidase (470 aa).

At 1-14 (MNPNKKIITIGSIS) the chain is on the intravirion side. The interval 11–32 (GSISLGLVVFNVLLHIVSIIVT) is involved in apical transport and lipid raft association. The helical transmembrane segment at 15–35 (LGLVVFNVLLHIVSIIVTVLV) threads the bilayer. The interval 32–86 (TVLVLGKGEKNGSCNETVVREYNETVKVEKVIQWHNTSVIEHIPYWNGGTYMNNT) is hypervariable stalk region. The Virion surface portion of the chain corresponds to 36 to 470 (LGKGEKNGSC…AILPFDIDKM (435 aa)). N-linked (GlcNAc...) asparagine; by host glycosylation is found at asparagine 42, asparagine 46, asparagine 54, asparagine 67, and asparagine 84. A head of neuraminidase region spans residues 89–470 (ICDVKGFAPF…AILPFDIDKM (382 aa)). 8 cysteine pairs are disulfide-bonded: cysteine 90-cysteine 417, cysteine 122-cysteine 127, cysteine 182-cysteine 229, cysteine 231-cysteine 236, cysteine 277-cysteine 290, cysteine 279-cysteine 288, cysteine 316-cysteine 335, and cysteine 421-cysteine 446. Arginine 116 is a substrate binding site. N-linked (GlcNAc...) asparagine; by host glycosylation occurs at asparagine 144. The Proton donor/acceptor role is filled by aspartate 149. Position 150 (arginine 150) interacts with substrate. Position 275-276 (275-276 (EE)) interacts with substrate. Position 291 (arginine 291) interacts with substrate. Aspartate 292 contributes to the Ca(2+) binding site. Asparagine 293 is a glycosylation site (N-linked (GlcNAc...) asparagine; by host). 2 residues coordinate Ca(2+): glycine 296 and aspartate 322. Arginine 368 serves as a coordination point for substrate. Asparagine 398 carries an N-linked (GlcNAc...) asparagine; by host glycan. Residue tyrosine 402 is the Nucleophile of the active site.

Belongs to the glycosyl hydrolase 34 family. As to quaternary structure, homotetramer. Ca(2+) serves as cofactor. N-glycosylated.

It localises to the virion membrane. The protein localises to the host apical cell membrane. The enzyme catalyses Hydrolysis of alpha-(2-&gt;3)-, alpha-(2-&gt;6)-, alpha-(2-&gt;8)- glycosidic linkages of terminal sialic acid residues in oligosaccharides, glycoproteins, glycolipids, colominic acid and synthetic substrates.. Inhibited by the neuraminidase inhibitors zanamivir (Relenza) and oseltamivir (Tamiflu). These drugs interfere with the release of progeny virus from infected cells and are effective against all influenza strains. Resistance to neuraminidase inhibitors is quite rare. Its function is as follows. Catalyzes the removal of terminal sialic acid residues from viral and cellular glycoconjugates. Cleaves off the terminal sialic acids on the glycosylated HA during virus budding to facilitate virus release. Additionally helps virus spread through the circulation by further removing sialic acids from the cell surface. These cleavages prevent self-aggregation and ensure the efficient spread of the progeny virus from cell to cell. Otherwise, infection would be limited to one round of replication. Described as a receptor-destroying enzyme because it cleaves a terminal sialic acid from the cellular receptors. May facilitate viral invasion of the upper airways by cleaving the sialic acid moieties on the mucin of the airway epithelial cells. Likely to plays a role in the budding process through its association with lipid rafts during intracellular transport. May additionally display a raft-association independent effect on budding. Plays a role in the determination of host range restriction on replication and virulence. Sialidase activity in late endosome/lysosome traffic seems to enhance virus replication. The polypeptide is Neuraminidase (Influenza A virus (strain A/Quail/Italy/1117/1965 H10N8)).